A 321-amino-acid chain; its full sequence is Histidine N-alpha-methyltransferase (321 aa).

Tyr56 serves as a coordination point for L-histidine. S-adenosyl-L-methionine-binding positions include Gly86, Lys92, Asp113, and 141-142; that span reads DF. Residues Asn166, Tyr206, and 282 to 284 each bind L-histidine; that span reads EVS.

Belongs to the methyltransferase superfamily. EgtD family. In terms of assembly, monomer.

It carries out the reaction L-histidine + 3 S-adenosyl-L-methionine = hercynine + 3 S-adenosyl-L-homocysteine + 3 H(+). It functions in the pathway amino-acid biosynthesis; ergothioneine biosynthesis. Catalyzes the SAM-dependent triple methylation of the alpha-amino group of histidine to form hercynine, a step in the biosynthesis pathway of ergothioneine (ERG). ERG is one of the major redox buffers which protects bacteria against redox stressors and antibiotics; loss of ERG or mycothiol (MSH, the other major redox buffer in this bacteria) leads to respiratory alterations and bioenergetic deficiencies that negatively impact virulence. In Mycobacterium tuberculosis (strain CDC 1551 / Oshkosh), this protein is Histidine N-alpha-methyltransferase (egtD).